Reading from the N-terminus, the 355-residue chain is N-acetyl-gamma-glutamyl-phosphate reductase (355 aa).

The active site involves C152.

Belongs to the NAGSA dehydrogenase family. Type 1 subfamily.

It is found in the cytoplasm. The catalysed reaction is N-acetyl-L-glutamate 5-semialdehyde + phosphate + NADP(+) = N-acetyl-L-glutamyl 5-phosphate + NADPH + H(+). It functions in the pathway amino-acid biosynthesis; L-arginine biosynthesis; N(2)-acetyl-L-ornithine from L-glutamate: step 3/4. Catalyzes the NADPH-dependent reduction of N-acetyl-5-glutamyl phosphate to yield N-acetyl-L-glutamate 5-semialdehyde. This Psychrobacter sp. (strain PRwf-1) protein is N-acetyl-gamma-glutamyl-phosphate reductase.